Reading from the N-terminus, the 311-residue chain is tRNA-cytidine(32) 2-sulfurtransferase (311 aa).

Positions 47 to 52 match the PP-loop motif motif; it reads SGGKDS. Residues C122, C125, and C213 each coordinate [4Fe-4S] cluster.

The protein belongs to the TtcA family. Homodimer. Mg(2+) is required as a cofactor. It depends on [4Fe-4S] cluster as a cofactor.

It localises to the cytoplasm. It catalyses the reaction cytidine(32) in tRNA + S-sulfanyl-L-cysteinyl-[cysteine desulfurase] + AH2 + ATP = 2-thiocytidine(32) in tRNA + L-cysteinyl-[cysteine desulfurase] + A + AMP + diphosphate + H(+). It participates in tRNA modification. Functionally, catalyzes the ATP-dependent 2-thiolation of cytidine in position 32 of tRNA, to form 2-thiocytidine (s(2)C32). The sulfur atoms are provided by the cysteine/cysteine desulfurase (IscS) system. This chain is tRNA-cytidine(32) 2-sulfurtransferase, found in Escherichia coli O45:K1 (strain S88 / ExPEC).